A 108-amino-acid polypeptide reads, in one-letter code: NADH dehydrogenase [ubiquinone] 1 alpha subcomplex subunit 8-A (108 aa).

2 CHCH domains span residues Gly-28–Leu-69 and His-70–Lys-108. 3 short sequence motifs (cx9C motif) span residues Cys-31 to Cys-41, Cys-51 to Cys-61, and Cys-73 to Cys-83. Disulfide bonds link Cys-31–Cys-61, Cys-41–Cys-51, Cys-73–Cys-105, and Cys-83–Cys-94. Positions Cys-94–Cys-105 match the Cx10C motif motif.

It belongs to the complex I NDUFA8 subunit family. Complex I is composed of at least 49 different subunits.

The protein resides in the mitochondrion. It is found in the mitochondrion intermembrane space. In terms of biological role, accessory subunit of the mitochondrial membrane respiratory chain NADH dehydrogenase (Complex I), that is believed not to be involved in catalysis. Complex I functions in the transfer of electrons from NADH to the respiratory chain. The immediate electron acceptor for the enzyme is believed to be ubiquinone. The chain is NADH dehydrogenase [ubiquinone] 1 alpha subcomplex subunit 8-A from Arabidopsis thaliana (Mouse-ear cress).